The sequence spans 339 residues: uncharacterized protein (339 aa).

2 VOC domains span residues 2 to 127 (EFDY…VRSE) and 141 to 276 (TIDH…CLEI). The Fe cation site is built by His-144, His-222, and Glu-306.

It belongs to the 4HPPD family. Requires Fe cation as cofactor.

This is an uncharacterized protein from Synechocystis sp. (strain ATCC 27184 / PCC 6803 / Kazusa).